The primary structure comprises 466 residues: Asparagine--tRNA ligase (466 aa).

The protein belongs to the class-II aminoacyl-tRNA synthetase family. As to quaternary structure, homodimer.

The protein resides in the cytoplasm. The enzyme catalyses tRNA(Asn) + L-asparagine + ATP = L-asparaginyl-tRNA(Asn) + AMP + diphosphate + H(+). The chain is Asparagine--tRNA ligase from Shewanella sp. (strain MR-7).